The primary structure comprises 156 residues: Small ribosomal subunit protein uS7 (156 aa).

Belongs to the universal ribosomal protein uS7 family. In terms of assembly, part of the 30S ribosomal subunit. Contacts proteins S9 and S11.

Functionally, one of the primary rRNA binding proteins, it binds directly to 16S rRNA where it nucleates assembly of the head domain of the 30S subunit. Is located at the subunit interface close to the decoding center, probably blocks exit of the E-site tRNA. The sequence is that of Small ribosomal subunit protein uS7 from Prochlorococcus marinus (strain NATL2A).